We begin with the raw amino-acid sequence, 373 residues long: Glutamate 5-kinase (373 aa).

Lysine 15 lines the ATP pocket. Substrate-binding residues include serine 56, aspartate 143, and asparagine 155. 175 to 176 (SD) is a binding site for ATP. A PUA domain is found at 281-358 (KGTLTIDAGA…PDVMTILGIS (78 aa)).

This sequence belongs to the glutamate 5-kinase family.

Its subcellular location is the cytoplasm. It catalyses the reaction L-glutamate + ATP = L-glutamyl 5-phosphate + ADP. The protein operates within amino-acid biosynthesis; L-proline biosynthesis; L-glutamate 5-semialdehyde from L-glutamate: step 1/2. In terms of biological role, catalyzes the transfer of a phosphate group to glutamate to form L-glutamate 5-phosphate. The polypeptide is Glutamate 5-kinase (Bradyrhizobium diazoefficiens (strain JCM 10833 / BCRC 13528 / IAM 13628 / NBRC 14792 / USDA 110)).